The chain runs to 507 residues: ATP synthase subunit alpha (507 aa).

170–177 (GDRKTGKT) contributes to the ATP binding site.

Belongs to the ATPase alpha/beta chains family. In terms of assembly, F-type ATPases have 2 components, CF(1) - the catalytic core - and CF(0) - the membrane proton channel. CF(1) has five subunits: alpha(3), beta(3), gamma(1), delta(1), epsilon(1). CF(0) has three main subunits: a(1), b(2) and c(9-12). The alpha and beta chains form an alternating ring which encloses part of the gamma chain. CF(1) is attached to CF(0) by a central stalk formed by the gamma and epsilon chains, while a peripheral stalk is formed by the delta and b chains.

It is found in the cell inner membrane. The enzyme catalyses ATP + H2O + 4 H(+)(in) = ADP + phosphate + 5 H(+)(out). Its function is as follows. Produces ATP from ADP in the presence of a proton gradient across the membrane. The alpha chain is a regulatory subunit. The sequence is that of ATP synthase subunit alpha from Anaplasma marginale (strain Florida).